The primary structure comprises 576 residues: Sulfite reductase [NADPH] hemoprotein beta-component (576 aa).

Positions 435, 441, 480, and 484 each coordinate [4Fe-4S] cluster. Position 484 (C484) interacts with siroheme.

The protein belongs to the nitrite and sulfite reductase 4Fe-4S domain family. Alpha(8)-beta(8). The alpha component is a flavoprotein, the beta component is a hemoprotein. Siroheme serves as cofactor. The cofactor is [4Fe-4S] cluster.

It catalyses the reaction hydrogen sulfide + 3 NADP(+) + 3 H2O = sulfite + 3 NADPH + 4 H(+). It functions in the pathway sulfur metabolism; hydrogen sulfide biosynthesis; hydrogen sulfide from sulfite (NADPH route): step 1/1. Functionally, component of the sulfite reductase complex that catalyzes the 6-electron reduction of sulfite to sulfide. This is one of several activities required for the biosynthesis of L-cysteine from sulfate. This is Sulfite reductase [NADPH] hemoprotein beta-component from Yersinia pseudotuberculosis serotype O:1b (strain IP 31758).